The primary structure comprises 322 residues: Cysteine protease yopT1 (322 aa).

The interval 42 to 69 (LSHSNRQKKLSATIKHNQSSRSMLDRKL) is disordered. Catalysis depends on residues cysteine 139, histidine 258, and aspartate 274.

It belongs to the peptidase C58 family. In terms of assembly, interacts with human ARHA.

It is found in the secreted. In terms of biological role, cysteine protease, which is translocated into infected cells and plays a central role in pathogenesis by cleaving the C-terminus end of the human small GTPase RhoA/ARHA, a regulator of cytoskeleton. Once cleaved, ARHA loses its lipid modification, and is released from the cell membrane, leading to the subsequent disruption of actin cytoskeleton of the host cell. This is Cysteine protease yopT1 (yopT1) from Yersinia enterocolitica serotype O:8 / biotype 1B (strain NCTC 13174 / 8081).